The primary structure comprises 536 residues: 2-isopropylmalate synthase (536 aa).

Positions 8 to 269 constitute a Pyruvate carboxyltransferase domain; sequence IIIFDTTLRD…YYNPFLGRPV (262 aa). Residues Asp17, His208, His210, and Asn244 each coordinate Mn(2+). The interval 408–536 is regulatory domain; the sequence is RLELVQVSCG…KEKAAVTSAS (129 aa).

Belongs to the alpha-IPM synthase/homocitrate synthase family. LeuA type 1 subfamily. In terms of assembly, homodimer. Requires Mn(2+) as cofactor.

It is found in the cytoplasm. It carries out the reaction 3-methyl-2-oxobutanoate + acetyl-CoA + H2O = (2S)-2-isopropylmalate + CoA + H(+). Its pathway is amino-acid biosynthesis; L-leucine biosynthesis; L-leucine from 3-methyl-2-oxobutanoate: step 1/4. Its function is as follows. Catalyzes the condensation of the acetyl group of acetyl-CoA with 3-methyl-2-oxobutanoate (2-ketoisovalerate) to form 3-carboxy-3-hydroxy-4-methylpentanoate (2-isopropylmalate). This chain is 2-isopropylmalate synthase, found in Gloeothece citriformis (strain PCC 7424) (Cyanothece sp. (strain PCC 7424)).